Here is a 493-residue protein sequence, read N- to C-terminus: Keratin, type II cuticular Hb3 (493 aa).

Positions 1–111 (MTCGFNSIGC…PNAQCVKQEE (111 aa)) are head. Residues 111-422 (EKEQIKSLNS…RLLEGEEQRL (312 aa)) form the IF rod domain. The interval 112–146 (KEQIKSLNSRFAAFIDKVRFLEQQNKLLETKLQFY) is coil 1A. The interval 147-156 (QNRECCQSNL) is linker 1. The interval 157 to 257 (EPLFAGYIET…YEEEIRILQS (101 aa)) is coil 1B. A Glycyl lysine isopeptide (Lys-Gly) (interchain with G-Cter in SUMO1) cross-link involves residue Lys-217. The linker 12 stretch occupies residues 258–274 (HISDTSVVVKLDNSRDL). The tract at residues 275-418 (NMDCIVAEIK…ATYRRLLEGE (144 aa)) is coil 2. Residues 419–493 (EQRLCEGVEA…GGGSCGQGRH (75 aa)) are tail.

It belongs to the intermediate filament family. Heterotetramer of two type I and two type II keratins. In terms of tissue distribution, synthesis begins in the cortex 10-15 cell layers above the apex of the dermal papilla and ends abruptly in the middle of the cortex.

In Homo sapiens (Human), this protein is Keratin, type II cuticular Hb3 (KRT83).